The primary structure comprises 109 residues: Large ribosomal subunit protein eL30 (109 aa).

It belongs to the eukaryotic ribosomal protein eL30 family.

This Methanopyrus kandleri (strain AV19 / DSM 6324 / JCM 9639 / NBRC 100938) protein is Large ribosomal subunit protein eL30.